The following is a 727-amino-acid chain: Catalase-peroxidase (727 aa).

Positions 1–26 (MDTKVETGGKCPVAHGPAGAKGRGNR) are disordered. The tryptophyl-tyrosyl-methioninium (Trp-Tyr) (with M-245) cross-link spans 97-219 (WHSAGTYRIT…LGAVQMGLIY (123 aa)). His-98 (proton acceptor) is an active-site residue. The segment at residues 219–245 (YVNPEGPNGNPDPIAAARDIRETFSRM) is a cross-link (tryptophyl-tyrosyl-methioninium (Tyr-Met) (with W-97)). Residue His-260 participates in heme b binding.

This sequence belongs to the peroxidase family. Peroxidase/catalase subfamily. In terms of assembly, homodimer or homotetramer. The cofactor is heme b. In terms of processing, formation of the three residue Trp-Tyr-Met cross-link is important for the catalase, but not the peroxidase activity of the enzyme.

It carries out the reaction H2O2 + AH2 = A + 2 H2O. The catalysed reaction is 2 H2O2 = O2 + 2 H2O. Bifunctional enzyme with both catalase and broad-spectrum peroxidase activity. This chain is Catalase-peroxidase, found in Allorhizobium ampelinum (strain ATCC BAA-846 / DSM 112012 / S4) (Agrobacterium vitis (strain S4)).